The chain runs to 104 residues: Urease subunit gamma (104 aa).

This sequence belongs to the urease gamma subunit family. Heterotrimer of UreA (gamma), UreB (beta) and UreC (alpha) subunits. Three heterotrimers associate to form the active enzyme.

It localises to the cytoplasm. The catalysed reaction is urea + 2 H2O + H(+) = hydrogencarbonate + 2 NH4(+). It participates in nitrogen metabolism; urea degradation; CO(2) and NH(3) from urea (urease route): step 1/1. This Actinomyces naeslundii protein is Urease subunit gamma.